A 256-amino-acid chain; its full sequence is MAVVLRGGITGGFLHHRRDASSVITRRISSVKAAGGGINPTVAVERATWLPGLNPPPYLDGNLAGDYGFDPLGLGEDPESLKWYVQAELVHSRFAMLGVAGILFTDLLRTTGIRNLPVWYEAGAVKFDFASTKTLIVVQFLLMGFAETKRYMDFVSPGSQAKEGSFFFGLEAALEGLEPGYPGGPLLNPLGLAKDVQNAHDWKLKEIKNGRLAMMAMLGFFVQASVTHTGPIDNLVEHLSNPWHKTIIQTLFTSTS.

The transit peptide at 1 to 32 directs the protein to the chloroplast; the sequence is MAVVLRGGITGGFLHHRRDASSVITRRISSVK. Position 33 is an N-acetylalanine (Ala-33). Trp-49 contributes to the chlorophyll b binding site. 2 residues coordinate chlorophyll a: Phe-69 and Glu-88. Arg-93 lines the chlorophyll b pocket. 2 helical membrane passes run 94-113 and 129-146; these read FAML…TTGI and FAST…MGFA. Chlorophyll b is bound by residues Glu-147 and Arg-150. Chlorophyll a contacts are provided by Lys-205, Glu-206, Asn-209, Arg-211, Gln-223, and His-238. Residues 212-232 form a helical membrane-spanning segment; sequence LAMMAMLGFFVQASVTHTGPI.

The protein belongs to the light-harvesting chlorophyll a/b-binding (LHC) protein family. As to quaternary structure, the LHC complex consists of chlorophyll a-b binding proteins. Homodimer. Heterodimer with LHCA2 and, possibly, LHCA3. Can substitute to LHCA4 to form a complex with LHCA1. Binds pigments. Element of the NAD(P)H dehydrogenase-photosystem I supercomplex (NDH-PSI). Binds at least 14 chlorophylls (8 Chl-a and 6 Chl-b) and carotenoids such as lutein and neoxanthin. is required as a cofactor. In terms of processing, photoregulated by reversible phosphorylation of its threonine residues.

It localises to the plastid. The protein resides in the chloroplast thylakoid membrane. Its function is as follows. The light-harvesting complex (LHC) functions as a light receptor, it captures and delivers excitation energy to photosystems with which it is closely associated. Seems involved in the function of the photosystem I in low light conditions, when other LHCA proteins are less abundant. Required, together with LHCA6, for the formation of a full-size NAD(P)H dehydrogenase-photosystem I supercomplex (NDH-PSI) that triggers cyclic and chlororespiratory electron transport in chloroplast thylakoids, especially under stress conditions (e.g. increased light intensity). The sequence is that of Photosystem I chlorophyll a/b-binding protein 5, chloroplastic from Arabidopsis thaliana (Mouse-ear cress).